Reading from the N-terminus, the 360-residue chain is C-X-C chemokine receptor type 2 (360 aa).

The Extracellular segment spans residues 1-48 (MTIILKDLSNSSILWEGFEDEFGNYSGTPPTEDYDYSPCEISTETLNK). Asparagine 10 and asparagine 24 each carry an N-linked (GlcNAc...) asparagine glycan. The chain crosses the membrane as a helical span at residues 49 to 75 (YAVVVIDALVFLLSLLGNSLVMLVILY). At 76-84 (SRIGRSVTD) the chain is on the cytoplasmic side. Residues 85–105 (VYLLNLAMADLLFAMTLPIWT) traverse the membrane as a helical segment. Residues 106–120 (ASKAKGWVFGTPLCK) are Extracellular-facing. A disulfide bridge links cysteine 119 with cysteine 196. Residues 121 to 142 (VVSLLKEVNFYSGILLLACISM) traverse the membrane as a helical segment. Residues 143 to 163 (DRYLAIVHATRTLTQKWHWVK) lie on the Cytoplasmic side of the membrane. A helical membrane pass occupies residues 164-183 (FICLGIWALSVILALPIFIF). Topologically, residues 184 to 208 (REAYQPPYSDLVCYEDLGANTTKWR) are extracellular. A helical transmembrane segment spans residues 209–231 (MIMRVLPQTFGFLLPLLVMLFCY). Topologically, residues 232–251 (GFTLRTLFSAQMGHKHRAMR) are cytoplasmic. The chain crosses the membrane as a helical span at residues 252 to 273 (VIFAVVLVFLLCWLPYNLVLIA). The Extracellular portion of the chain corresponds to 274 to 294 (DTLMRAHVIAETCQRRNDIGR). Residues 295 to 315 (ALDATEILGFLHSCLNPLIYV) form a helical membrane-spanning segment. Residues 316-360 (FIGQKFRHGLLKIMAIHGLISKEFLAKDGRPSFVGSSSGNTSTTL) lie on the Cytoplasmic side of the membrane.

Belongs to the G-protein coupled receptor 1 family. As to quaternary structure, interacts with IL8. Interacts with GNAI2. Post-translationally, phosphorylated upon ligand binding; which is required for desensitization.

The protein resides in the cell membrane. Functionally, receptor for interleukin-8 which is a powerful neutrophil chemotactic factor. Binding of IL-8 to the receptor causes activation of neutrophils. This response is mediated via a G-protein that activates a phosphatidylinositol-calcium second messenger system. Binds to IL-8 with high affinity. Also binds with high affinity to CXCL3, GRO/MGSA and NAP-2. This chain is C-X-C chemokine receptor type 2 (CXCR2), found in Bos taurus (Bovine).